The sequence spans 1603 residues: Gag-Pol polyprotein (1603 aa).

Over residues 128–141 (VGETTVQRDAKMAP) the composition is skewed to basic and acidic residues. The interval 128 to 150 (VGETTVQRDAKMAPEETATPKTV) is disordered. Residues 172 to 175 (PPPY) carry the PPXY motif motif. Positions 180–184 (LYPSL) match the LYPX(n)L motif motif. The disordered stretch occupies residues 181–217 (YPSLAGVGEQQGQGGDTPPGAEQSRAEPGHAGQAPGP). 3 involved in capsid protein dimerization regions span residues 217–259 (PALT…KLIT), 290–298 (HDVTNLMRV), and 351–362 (GMVGNPQGQAAL). The Nuclear export signal motif lies at 219–229 (LTDWARVREEL). CCHC-type zinc fingers lie at residues 507–524 (GLCY…QCPK) and 533–550 (ERCQ…QCRK). Residues 524–527 (KKRK) carry the Nuclear/nucleolar localization signal motif. The disordered stretch occupies residues 543–575 (HNAKQCRKRDGNQGQRPGKGLSSGPWPGPEPPA). Positions 609–690 (ITALLDSGAD…VRGSILGRDC (82 aa)) constitute a Peptidase A2 domain. Asp-614 (for protease activity; shared with dimeric partner) is an active-site residue. The Reverse transcriptase domain occupies 750 to 938 (LQLGHIEPSL…PGVQYLGYKL (189 aa)). Asp-815, Asp-890, Asp-891, Asp-1158, Glu-1192, Asp-1213, and Asp-1272 together coordinate Mg(2+). Positions 1149-1280 (PVPGPTVFTD…ADSQATFQAY (132 aa)) constitute an RNase H type-1 domain. Residues 1280-1321 (YPLREAKDLHTALHIGPRALSKACNISMQQAREVVQTCPHCN) form an Integrase-type zinc finger. Zn(2+) is bound by residues His-1289, His-1293, Cys-1317, and Cys-1320. The region spanning 1333-1496 (RGLGPLQIWQ…TPIQKHWRPT (164 aa)) is the Integrase catalytic domain. Positions 1344, 1401, and 1437 each coordinate Mg(2+). A DNA-binding region (integrase-type) is located at residues 1502-1550 (PPVKIRIETGEWEKGWNVLVWGRGYAAVKNRDTDKVIWVPSRKVKPDIT). An involved in homooctamerization region spans residues 1548–1567 (DITQKDEVTKKDEASPLFAG). Positions 1569-1603 (SDWIPWEDEQEGLQGETASNKQERPGEDTLAANES) are disordered.

Active as a homodimer. As to quaternary structure, homodimer. Homomultimer. Homohexamer. In terms of assembly, homodimer; further associates as a homooctamer. Heterodimer of alpha and beta subunits. Three forms of RT exist: alpha-alpha (alpha-Pol), beta-beta (beta-Pol), and alpha-beta, with the major form being the heterodimer. Both the polymerase and RNase H active sites are located in the alpha subunit of heterodimeric RT alpha-beta. Mg(2+) serves as cofactor. Mn(2+) is required as a cofactor. Specific enzymatic cleavages in vivo yield mature proteins. In terms of processing, capsid protein p27: The cleavage at the C-terminus is slowly trimmed by the viral protease, sometimes being cut internally thereby generating the short version of the capsid protein and a capsid protein C-terminally extended by 3 amino acids in a ratio of 2:1.

It localises to the virion. It carries out the reaction DNA(n) + a 2'-deoxyribonucleoside 5'-triphosphate = DNA(n+1) + diphosphate. It catalyses the reaction Endonucleolytic cleavage to 5'-phosphomonoester.. Capsid protein p27: Self-associates to form the irregular polyhedron core composed of hexamers and pentamers, that encapsulates the genomic RNA-nucleocapsid complex. Assembles as a tube in vitro. Binds to inositol hexakisphosphate (IP6), which allows the assembly of the polyhedral capsid. Its function is as follows. Plays a role in the oligomerization of the Gag polyprotein and in the stabilization of the immature particle. Essential layering element during tube assembly. Allows the cooperative binging of Gag to the host plasma membrane. In terms of biological role, binds strongly to viral nucleic acids and promotes their packaging. Plays a role in the maturation-stabilization of the viral dimeric RNA via highly structured zinc-binding motifs. Functionally, the aspartyl protease mediates proteolytic cleavages of Gag and Gag-Pol polyproteins during or shortly after the release of the virion from the plasma membrane. Cleavages take place as an ordered, step-wise cascade to yield mature proteins. This process is called maturation. Displays maximal activity during the budding process just prior to particle release from the cell. Catalyzes viral DNA integration into the host chromosome, by performing a series of DNA cutting and joining reactions. This recombination event is an essential step in the viral replication cycle. Has a strong preference for using the 3'-OH at the viral DNA end as a nucleophile. The sequence is that of Gag-Pol polyprotein (gag-pol) from Gallus gallus (Chicken).